The sequence spans 275 residues: Phenylalanine-4-hydroxylase (275 aa).

Fe cation is bound by residues histidine 135, histidine 140, and glutamate 181.

Belongs to the biopterin-dependent aromatic amino acid hydroxylase family. Fe(2+) serves as cofactor.

The catalysed reaction is (6R)-L-erythro-5,6,7,8-tetrahydrobiopterin + L-phenylalanine + O2 = (4aS,6R)-4a-hydroxy-L-erythro-5,6,7,8-tetrahydrobiopterin + L-tyrosine. Its pathway is amino-acid degradation; L-phenylalanine degradation; acetoacetate and fumarate from L-phenylalanine: step 1/6. The sequence is that of Phenylalanine-4-hydroxylase (phhA) from Mesorhizobium japonicum (strain LMG 29417 / CECT 9101 / MAFF 303099) (Mesorhizobium loti (strain MAFF 303099)).